The following is a 129-amino-acid chain: Putative transmembrane protein 10 (129 aa).

3 helical membrane passes run 3-23, 27-47, and 85-105; these read NFSYFSTIFSIALMSSNAFAG, LLVGFCPCIEINTLTLFLSSL, and SSVLSCFTSCFVIYFYPFFVF.

Its subcellular location is the host membrane. The polypeptide is Putative transmembrane protein 10 (SIFV0010) (Sulfolobus islandicus filamentous virus (isolate Iceland/Hveragerdi) (SIFV)).